A 144-amino-acid polypeptide reads, in one-letter code: Granulocyte-macrophage colony-stimulating factor (144 aa).

An N-terminal signal peptide occupies residues 1–17; it reads MWLQNLLLLGTVVCSIS. Residue Ser-24 is glycosylated (O-linked (GalNAc...) serine). The O-linked (GalNAc...) threonine glycan is linked to Thr-27. N-linked (GlcNAc...) asparagine glycans are attached at residues Asn-44, Asn-47, and Asn-54. 2 disulfide bridges follow: Cys-71–Cys-113 and Cys-105–Cys-138.

This sequence belongs to the GM-CSF family. In terms of assembly, monomer. The signaling GM-CSF receptor complex is a dodecamer of two head-to-head hexamers of two alpha, two beta, and two ligand subunits.

It localises to the secreted. Cytokine that stimulates the growth and differentiation of hematopoietic precursor cells from various lineages, including granulocytes, macrophages, eosinophils and erythrocytes. The protein is Granulocyte-macrophage colony-stimulating factor (CSF2) of Sus scrofa (Pig).